The primary structure comprises 321 residues: 6-phosphogluconolactonase-like protein 1 (321 aa).

The disordered stretch occupies residues 36-85 (GKVSRSTQMSGTSLNGNGNTESKTMERVNSVRSNASSRGGSEDGATKKLK). Positions 39–57 (SRSTQMSGTSLNGNGNTES) are enriched in polar residues. Low complexity predominate over residues 63-74 (VNSVRSNASSRG). Phosphoserine is present on residues Ser-65 and Ser-68. The segment covering 75–85 (GSEDGATKKLK) has biased composition (basic and acidic residues). Thr-320 is subject to Phosphothreonine.

Belongs to the glucosamine/galactosamine-6-phosphate isomerase family. 6-phosphogluconolactonase subfamily.

Its subcellular location is the cytoplasm. The protein localises to the nucleus. In terms of biological role, may be involved in regulation of tRNA subcellular distribution. The sequence is that of 6-phosphogluconolactonase-like protein 1 (SOL1) from Saccharomyces cerevisiae (strain ATCC 204508 / S288c) (Baker's yeast).